The chain runs to 174 residues: Protein VdlD (174 aa).

The HotDog ACOT-type domain maps to 20–132 (DRTKLLMSYL…YFTMVAVENG (113 aa)).

This sequence belongs to the acyl coenzyme A hydrolase family.

The chain is Protein VdlD (vdlD) from Helicobacter pylori (strain J99 / ATCC 700824) (Campylobacter pylori J99).